The following is a 37-amino-acid chain: Large ribosomal subunit protein bL36 (37 aa).

It belongs to the bacterial ribosomal protein bL36 family.

In Nostoc sp. (strain PCC 7120 / SAG 25.82 / UTEX 2576), this protein is Large ribosomal subunit protein bL36.